Reading from the N-terminus, the 363-residue chain is Ribosomal RNA large subunit methyltransferase M (363 aa).

S-adenosyl-L-methionine-binding positions include S190, 223–226, D242, D262, and D279; that span reads CPGG. K308 functions as the Proton acceptor in the catalytic mechanism.

This sequence belongs to the class I-like SAM-binding methyltransferase superfamily. RNA methyltransferase RlmE family. RlmM subfamily. In terms of assembly, monomer.

It localises to the cytoplasm. The catalysed reaction is cytidine(2498) in 23S rRNA + S-adenosyl-L-methionine = 2'-O-methylcytidine(2498) in 23S rRNA + S-adenosyl-L-homocysteine + H(+). Its function is as follows. Catalyzes the 2'-O-methylation at nucleotide C2498 in 23S rRNA. The protein is Ribosomal RNA large subunit methyltransferase M of Vibrio vulnificus (strain CMCP6).